The following is a 419-amino-acid chain: Variant surface glycoprotein YnAT 1.1 (419 aa).

A signal peptide spans 1-28; that stretch reads MKRVLSNVLKAWIFTIVAFHNFSTSVTA. Residues Asn82 and Asn358 are each glycosylated (N-linked (GlcNAc...) asparagine). The segment at 369-405 is disordered; the sequence is ESSRPPSTDANTSQKGPLQRPEKSGESSHLPSGSSHG. A compositionally biased stretch (polar residues) spans 372–384; that stretch reads RPPSTDANTSQKG. N-linked (GlcNAc...) (high mannose) asparagine glycosylation occurs at Asn379. Low complexity predominate over residues 395–405; it reads SSHLPSGSSHG. The GPI-anchor amidated serine moiety is linked to residue Ser400. Positions 401-419 are cleaved as a propeptide — removed in mature form; that stretch reads GSSHGTKAIRSILHVALLM.

It localises to the cell membrane. Its function is as follows. VSG forms a coat on the surface of the parasite. The trypanosome evades the immune response of the host by expressing a series of antigenically distinct VSGs from an estimated 1000 VSG genes. This is Variant surface glycoprotein YnAT 1.1 from Trypanosoma congolense.